A 150-amino-acid chain; its full sequence is Large ribosomal subunit protein eL19 (150 aa).

Residues 56–89 (KGQSRARARAFQEARKKGRHRGPGSKKGKKTARM) form a disordered region. Residues 71-89 (KKGRHRGPGSKKGKKTARM) are compositionally biased toward basic residues.

It belongs to the eukaryotic ribosomal protein eL19 family. Part of the 50S ribosomal subunit.

In terms of biological role, binds to the 23S rRNA. The sequence is that of Large ribosomal subunit protein eL19 from Thermococcus kodakarensis (strain ATCC BAA-918 / JCM 12380 / KOD1) (Pyrococcus kodakaraensis (strain KOD1)).